The following is a 114-amino-acid chain: Large ribosomal subunit protein uL22 (114 aa).

The protein belongs to the universal ribosomal protein uL22 family. Part of the 50S ribosomal subunit.

Its function is as follows. This protein binds specifically to 23S rRNA; its binding is stimulated by other ribosomal proteins, e.g. L4, L17, and L20. It is important during the early stages of 50S assembly. It makes multiple contacts with different domains of the 23S rRNA in the assembled 50S subunit and ribosome. The globular domain of the protein is located near the polypeptide exit tunnel on the outside of the subunit, while an extended beta-hairpin is found that lines the wall of the exit tunnel in the center of the 70S ribosome. The protein is Large ribosomal subunit protein uL22 of Methylacidiphilum infernorum (isolate V4) (Methylokorus infernorum (strain V4)).